A 294-amino-acid polypeptide reads, in one-letter code: MFLEKLVEMARGKGKKLAVAAANDDHVIEAVYRAWRERVCEPVLFGPEEEITRIIEELVPEWKNPQIIDCPPEEAGRLAVEAVSKGECDFLMKGKIKTGDLMKIYLDERYGLRTGKTMAMVSVMEIPDFPRPLIISDPGMLISPTLEQKVDMIEHCVRVANVMGLETPKVAVVGAIEVVNPKMPITMEAAILSKMNQRGQIKGCIVDGPFALDNVVSEEAAKKKGIQSPVAGKADILILPDIEAANILYKALVFLAKAKSASTILGGKVPVVLTSRADSEETKFYSIALSAVFA.

Belongs to the phosphate acetyltransferase and butyryltransferase family. Homotetramer.

The protein resides in the cytoplasm. The catalysed reaction is acetyl-CoA + phosphate = acetyl phosphate + CoA. It functions in the pathway metabolic intermediate biosynthesis; acetyl-CoA biosynthesis; acetyl-CoA from acetate: step 2/2. In terms of biological role, in addition to acetyl-CoA (100%), the enzyme accepts propionyl-CoA (60%) and butyryl-CoA (30%). In Thermotoga maritima (strain ATCC 43589 / DSM 3109 / JCM 10099 / NBRC 100826 / MSB8), this protein is Phosphate acetyltransferase (pta).